Reading from the N-terminus, the 111-residue chain is uncharacterized protein (111 aa).

Positions 4–51 (LGQVKVLEEKVAKAVHLVQMLKEENAALRAEIDGRGKRITELEQLVLX) form a coiled coil.

This is an uncharacterized protein from Treponema pallidum (strain Nichols).